Reading from the N-terminus, the 132-residue chain is uncharacterized protein (132 aa).

The tract at residues 107-132 (LNTFSGSGQKHSQPGSGQHPFSFRKD) is disordered. Residues 108 to 122 (NTFSGSGQKHSQPGS) show a composition bias toward polar residues.

This is an uncharacterized protein from Bacillus subtilis (strain 168).